The following is a 273-amino-acid chain: 4-hydroxy-tetrahydrodipicolinate reductase (273 aa).

Residues 12 to 17 (GAGGRM) and Glu-38 each bind NAD(+). Arg-39 serves as a coordination point for NADP(+). NAD(+) contacts are provided by residues 102–104 (GTT) and 126–129 (AANF). His-159 acts as the Proton donor/acceptor in catalysis. His-160 contributes to the (S)-2,3,4,5-tetrahydrodipicolinate binding site. Catalysis depends on Lys-163, which acts as the Proton donor. 169–170 (GT) serves as a coordination point for (S)-2,3,4,5-tetrahydrodipicolinate.

The protein belongs to the DapB family. In terms of assembly, homotetramer.

It localises to the cytoplasm. The enzyme catalyses (S)-2,3,4,5-tetrahydrodipicolinate + NAD(+) + H2O = (2S,4S)-4-hydroxy-2,3,4,5-tetrahydrodipicolinate + NADH + H(+). It catalyses the reaction (S)-2,3,4,5-tetrahydrodipicolinate + NADP(+) + H2O = (2S,4S)-4-hydroxy-2,3,4,5-tetrahydrodipicolinate + NADPH + H(+). It functions in the pathway amino-acid biosynthesis; L-lysine biosynthesis via DAP pathway; (S)-tetrahydrodipicolinate from L-aspartate: step 4/4. Functionally, catalyzes the conversion of 4-hydroxy-tetrahydrodipicolinate (HTPA) to tetrahydrodipicolinate. The chain is 4-hydroxy-tetrahydrodipicolinate reductase from Shigella boydii serotype 4 (strain Sb227).